A 143-amino-acid chain; its full sequence is Transcriptional regulator MraZ (143 aa).

SpoVT-AbrB domains lie at 5 to 47 and 76 to 119; these read EYEH…PMPV and ASDL…SAER.

Belongs to the MraZ family. In terms of assembly, forms oligomers.

It is found in the cytoplasm. It localises to the nucleoid. This is Transcriptional regulator MraZ from Herpetosiphon aurantiacus (strain ATCC 23779 / DSM 785 / 114-95).